The sequence spans 202 residues: Large ribosomal subunit protein uL4 (202 aa).

A disordered region spans residues 47 to 67 (KTKAEVSGGGVKPWKQKGTGR).

Belongs to the universal ribosomal protein uL4 family. In terms of assembly, part of the 50S ribosomal subunit.

One of the primary rRNA binding proteins, this protein initially binds near the 5'-end of the 23S rRNA. It is important during the early stages of 50S assembly. It makes multiple contacts with different domains of the 23S rRNA in the assembled 50S subunit and ribosome. In terms of biological role, forms part of the polypeptide exit tunnel. The chain is Large ribosomal subunit protein uL4 from Dichelobacter nodosus (strain VCS1703A).